Here is a 308-residue protein sequence, read N- to C-terminus: UDP-N-acetylenolpyruvoylglucosamine reductase (308 aa).

In terms of domain architecture, FAD-binding PCMH-type spans 30–213; the sequence is RVGGAAEWFI…KATTQSHLDH (184 aa). Arginine 176 is an active-site residue. Serine 227 serves as the catalytic Proton donor. Glutamate 297 is a catalytic residue.

This sequence belongs to the MurB family. Requires FAD as cofactor.

It localises to the cytoplasm. It catalyses the reaction UDP-N-acetyl-alpha-D-muramate + NADP(+) = UDP-N-acetyl-3-O-(1-carboxyvinyl)-alpha-D-glucosamine + NADPH + H(+). Its pathway is cell wall biogenesis; peptidoglycan biosynthesis. Functionally, cell wall formation. This chain is UDP-N-acetylenolpyruvoylglucosamine reductase, found in Acaryochloris marina (strain MBIC 11017).